Reading from the N-terminus, the 344-residue chain is Probable dual-specificity RNA methyltransferase RlmN (344 aa).

The Proton acceptor role is filled by glutamate 92. The 228-residue stretch at 98 to 325 folds into the Radical SAM core domain; sequence DEDRATLCVS…TTIRASRGED (228 aa). Cysteine 105 and cysteine 330 form a disulfide bridge. Residues cysteine 112, cysteine 116, and cysteine 119 each coordinate [4Fe-4S] cluster. Residues 157 to 158, serine 189, 211 to 213, and histidine 287 contribute to the S-adenosyl-L-methionine site; these read GE and SLH. Cysteine 330 (S-methylcysteine intermediate) is an active-site residue.

This sequence belongs to the radical SAM superfamily. RlmN family. [4Fe-4S] cluster serves as cofactor.

The protein resides in the cytoplasm. The enzyme catalyses adenosine(2503) in 23S rRNA + 2 reduced [2Fe-2S]-[ferredoxin] + 2 S-adenosyl-L-methionine = 2-methyladenosine(2503) in 23S rRNA + 5'-deoxyadenosine + L-methionine + 2 oxidized [2Fe-2S]-[ferredoxin] + S-adenosyl-L-homocysteine. It catalyses the reaction adenosine(37) in tRNA + 2 reduced [2Fe-2S]-[ferredoxin] + 2 S-adenosyl-L-methionine = 2-methyladenosine(37) in tRNA + 5'-deoxyadenosine + L-methionine + 2 oxidized [2Fe-2S]-[ferredoxin] + S-adenosyl-L-homocysteine. Its function is as follows. Specifically methylates position 2 of adenine 2503 in 23S rRNA and position 2 of adenine 37 in tRNAs. The protein is Probable dual-specificity RNA methyltransferase RlmN of Bacteroides fragilis (strain ATCC 25285 / DSM 2151 / CCUG 4856 / JCM 11019 / LMG 10263 / NCTC 9343 / Onslow / VPI 2553 / EN-2).